The primary structure comprises 932 residues: Protocadherin gamma-A12 (932 aa).

Residues 1–29 (MIPARLHRDYKGLVLLGILLGTLWETGCT) form the signal peptide. 6 Cadherin domains span residues 30–133 (QIRY…APYF), 134–242 (RESE…APAF), 243–347 (AQPE…APEV), 348–452 (VLTS…PPVF), 453–562 (PQAS…APEI), and 570–683 (DGST…SPAN). At 30–692 (QIRYSVPEEL…NSETSDLTLY (663 aa)) the chain is on the extracellular side. N-linked (GlcNAc...) asparagine glycosylation is found at asparagine 265, asparagine 419, and asparagine 545. A helical transmembrane segment spans residues 693-713 (LVVAVAAVSCVFLAFVILLLA). Residues 714 to 932 (LRLRRWHKSR…KKKSGKKEKK (219 aa)) are Cytoplasmic-facing. Disordered stretches follow at residues 803 to 841 (SHGL…WPNN) and 902 to 932 (ATLT…KEKK). Residues 816–841 (WRFSQAQRPGTSGSQNGDDTGTWPNN) show a composition bias toward polar residues. The segment covering 922–932 (NKKKSGKKEKK) has biased composition (basic residues).

The protein resides in the cell membrane. Potential calcium-dependent cell-adhesion protein. May be involved in the establishment and maintenance of specific neuronal connections in the brain. The chain is Protocadherin gamma-A12 (PCDHGA12) from Homo sapiens (Human).